The primary structure comprises 508 residues: Maturase K (508 aa).

The protein belongs to the intron maturase 2 family. MatK subfamily.

Its subcellular location is the plastid. The protein localises to the chloroplast. Functionally, usually encoded in the trnK tRNA gene intron. Probably assists in splicing its own and other chloroplast group II introns. The sequence is that of Maturase K from Coronilla varia (Crown vetch).